The sequence spans 234 residues: Endonuclease V (234 aa).

Residues D42 and D108 each contribute to the Mg(2+) site.

This sequence belongs to the endonuclease V family. Mg(2+) serves as cofactor.

Its subcellular location is the cytoplasm. The enzyme catalyses Endonucleolytic cleavage at apurinic or apyrimidinic sites to products with a 5'-phosphate.. In terms of biological role, DNA repair enzyme involved in the repair of deaminated bases. Selectively cleaves double-stranded DNA at the second phosphodiester bond 3' to a deoxyinosine leaving behind the intact lesion on the nicked DNA. This Geotalea uraniireducens (strain Rf4) (Geobacter uraniireducens) protein is Endonuclease V.